The chain runs to 447 residues: 3-phosphoshikimate 1-carboxyvinyltransferase 2 (447 aa).

Positions 40, 41, and 45 each coordinate 3-phosphoshikimate. Residue lysine 40 coordinates phosphoenolpyruvate. Phosphoenolpyruvate contacts are provided by glycine 109 and arginine 138. Residues serine 184, serine 185, glutamine 186, aspartate 329, and histidine 356 each contribute to the 3-phosphoshikimate site. Glutamine 186 serves as a coordination point for phosphoenolpyruvate. Residue aspartate 329 is the Proton acceptor of the active site. 3 residues coordinate phosphoenolpyruvate: arginine 360, arginine 403, and lysine 428.

The protein belongs to the EPSP synthase family. In terms of assembly, monomer.

Its subcellular location is the cytoplasm. The enzyme catalyses 3-phosphoshikimate + phosphoenolpyruvate = 5-O-(1-carboxyvinyl)-3-phosphoshikimate + phosphate. It functions in the pathway metabolic intermediate biosynthesis; chorismate biosynthesis; chorismate from D-erythrose 4-phosphate and phosphoenolpyruvate: step 6/7. Functionally, catalyzes the transfer of the enolpyruvyl moiety of phosphoenolpyruvate (PEP) to the 5-hydroxyl of shikimate-3-phosphate (S3P) to produce enolpyruvyl shikimate-3-phosphate and inorganic phosphate. The chain is 3-phosphoshikimate 1-carboxyvinyltransferase 2 from Halalkalibacterium halodurans (strain ATCC BAA-125 / DSM 18197 / FERM 7344 / JCM 9153 / C-125) (Bacillus halodurans).